We begin with the raw amino-acid sequence, 236 residues long: MIVFILLSLAAVLEQSFGNVDFNSESPRRPEKQKEIVDRHNSFRRSVRPTASNMLKMEWYSEAASNAERWAYRCNLGHSPDSSRILDGIKCGENIYMSSNPRAWTEILQLWYDEYKNFVYGVGANPPGSVTGHFSQMVWYKSYRIGCAAAYCPSSGYSYFYVCQYCPIGNIEGSTATPYKSGPTCGDCPSACDNGLCTNPCLREDKFTNCKSLVQQNSCQHDWTRKNCPATCFCHN.

Positions 1–18 are cleaved as a signal peptide; that stretch reads MIVFILLSLAAVLEQSFG. The SCP domain occupies 37–165; it reads VDRHNSFRRS…GYSYFYVCQY (129 aa). 8 cysteine pairs are disulfide-bonded: cysteine 74–cysteine 152, cysteine 91–cysteine 166, cysteine 147–cysteine 163, cysteine 185–cysteine 192, cysteine 188–cysteine 197, cysteine 201–cysteine 234, cysteine 210–cysteine 228, and cysteine 219–cysteine 232. The ShKT domain maps to 201–234; sequence CLREDKFTNCKSLVQQNSCQHDWTRKNCPATCFC.

This sequence belongs to the CRISP family. Expressed by the venom gland.

It is found in the secreted. Its function is as follows. Blocks contraction of smooth muscle elicited by high potassium-induced depolarization, but does not block caffeine-stimulated contraction. May target voltage-gated calcium channels on smooth muscle. In Trimorphodon biscutatus (Western lyre snake), this protein is Cysteine-rich venom protein TRI1.